The following is a 249-amino-acid chain: 5'-nucleotidase SurE (249 aa).

Positions 8, 9, 39, and 91 each coordinate a divalent metal cation.

Belongs to the SurE nucleotidase family. Requires a divalent metal cation as cofactor.

The protein localises to the cytoplasm. It catalyses the reaction a ribonucleoside 5'-phosphate + H2O = a ribonucleoside + phosphate. Functionally, nucleotidase that shows phosphatase activity on nucleoside 5'-monophosphates. This Haemophilus influenzae (strain 86-028NP) protein is 5'-nucleotidase SurE.